Here is a 312-residue protein sequence, read N- to C-terminus: D-alanine--D-alanine ligase (312 aa).

Positions 108–308 (KLVWQQTGIP…YSELVVKVLS (201 aa)) constitute an ATP-grasp domain. 138–193 (VAKLGVPLFVKPASEGSSVAVEKVKSADALPAALEEAAKHDKIVIVEKSIEGGGEY) lines the ATP pocket. Mg(2+)-binding residues include D262, E275, and N277.

This sequence belongs to the D-alanine--D-alanine ligase family. It depends on Mg(2+) as a cofactor. Mn(2+) serves as cofactor.

It localises to the cytoplasm. The catalysed reaction is 2 D-alanine + ATP = D-alanyl-D-alanine + ADP + phosphate + H(+). It functions in the pathway cell wall biogenesis; peptidoglycan biosynthesis. Functionally, cell wall formation. This is D-alanine--D-alanine ligase from Burkholderia mallei (strain NCTC 10247).